The sequence spans 455 residues: Bifunctional protein GlmU (455 aa).

Residues 1-225 are pyrophosphorylase; the sequence is MNIVILAAGM…EWETLGVNSK (225 aa). Residues 6 to 9, Lys20, Gln71, 76 to 77, 98 to 100, Gly135, Glu150, Asn165, and Asn223 contribute to the UDP-N-acetyl-alpha-D-glucosamine site; these read LAAG, GT, and YGD. Position 100 (Asp100) interacts with Mg(2+). Asn223 is a binding site for Mg(2+). The tract at residues 226–246 is linker; it reads VQLAELERIHQRNLAQQLLED. Residues 247 to 455 are N-acetyltransferase; sequence GVTLIDPARI…QRPVKQKKEG (209 aa). Residues Arg329 and Lys347 each contribute to the UDP-N-acetyl-alpha-D-glucosamine site. His359 functions as the Proton acceptor in the catalytic mechanism. The UDP-N-acetyl-alpha-D-glucosamine site is built by Tyr362 and Asn373. Acetyl-CoA-binding positions include Ala376, 382 to 383, Ser401, Ala419, and Arg436; that span reads NY.

In the N-terminal section; belongs to the N-acetylglucosamine-1-phosphate uridyltransferase family. It in the C-terminal section; belongs to the transferase hexapeptide repeat family. In terms of assembly, homotrimer. It depends on Mg(2+) as a cofactor.

The protein resides in the cytoplasm. The enzyme catalyses alpha-D-glucosamine 1-phosphate + acetyl-CoA = N-acetyl-alpha-D-glucosamine 1-phosphate + CoA + H(+). It carries out the reaction N-acetyl-alpha-D-glucosamine 1-phosphate + UTP + H(+) = UDP-N-acetyl-alpha-D-glucosamine + diphosphate. It functions in the pathway nucleotide-sugar biosynthesis; UDP-N-acetyl-alpha-D-glucosamine biosynthesis; N-acetyl-alpha-D-glucosamine 1-phosphate from alpha-D-glucosamine 6-phosphate (route II): step 2/2. It participates in nucleotide-sugar biosynthesis; UDP-N-acetyl-alpha-D-glucosamine biosynthesis; UDP-N-acetyl-alpha-D-glucosamine from N-acetyl-alpha-D-glucosamine 1-phosphate: step 1/1. The protein operates within bacterial outer membrane biogenesis; LPS lipid A biosynthesis. Functionally, catalyzes the last two sequential reactions in the de novo biosynthetic pathway for UDP-N-acetylglucosamine (UDP-GlcNAc). The C-terminal domain catalyzes the transfer of acetyl group from acetyl coenzyme A to glucosamine-1-phosphate (GlcN-1-P) to produce N-acetylglucosamine-1-phosphate (GlcNAc-1-P), which is converted into UDP-GlcNAc by the transfer of uridine 5-monophosphate (from uridine 5-triphosphate), a reaction catalyzed by the N-terminal domain. The sequence is that of Bifunctional protein GlmU from Ralstonia pickettii (strain 12J).